The following is a 93-amino-acid chain: RNA-binding protein Hfq (93 aa).

Residues 9-68 (DPYLNALRRERIPVSIYLVNGIKLQGQIESFDQFVILLKNTVSQMVYKHAISTVVPARAI) form the Sm domain. Low complexity predominate over residues 70-81 (HNNNSNHAHQAA). A disordered region spans residues 70–93 (HNNNSNHAHQAAPVQSAEVVEKVE).

The protein belongs to the Hfq family. As to quaternary structure, homohexamer.

Functionally, RNA chaperone that binds small regulatory RNA (sRNAs) and mRNAs to facilitate mRNA translational regulation in response to envelope stress, environmental stress and changes in metabolite concentrations. Also binds with high specificity to tRNAs. This chain is RNA-binding protein Hfq, found in Glaesserella parasuis serovar 5 (strain SH0165) (Haemophilus parasuis).